A 289-amino-acid chain; its full sequence is Acetyl-coenzyme A carboxylase carboxyl transferase subunit beta (289 aa).

Residues valine 28–asparagine 289 enclose the CoA carboxyltransferase N-terminal domain. The Zn(2+) site is built by cysteine 32, cysteine 35, cysteine 51, and cysteine 54. Residues cysteine 32–cysteine 54 form a C4-type zinc finger.

The protein belongs to the AccD/PCCB family. Acetyl-CoA carboxylase is a heterohexamer composed of biotin carboxyl carrier protein (AccB), biotin carboxylase (AccC) and two subunits each of ACCase subunit alpha (AccA) and ACCase subunit beta (AccD). The cofactor is Zn(2+).

It is found in the cytoplasm. The catalysed reaction is N(6)-carboxybiotinyl-L-lysyl-[protein] + acetyl-CoA = N(6)-biotinyl-L-lysyl-[protein] + malonyl-CoA. The protein operates within lipid metabolism; malonyl-CoA biosynthesis; malonyl-CoA from acetyl-CoA: step 1/1. Its function is as follows. Component of the acetyl coenzyme A carboxylase (ACC) complex. Biotin carboxylase (BC) catalyzes the carboxylation of biotin on its carrier protein (BCCP) and then the CO(2) group is transferred by the transcarboxylase to acetyl-CoA to form malonyl-CoA. In Bacillus cytotoxicus (strain DSM 22905 / CIP 110041 / 391-98 / NVH 391-98), this protein is Acetyl-coenzyme A carboxylase carboxyl transferase subunit beta.